Reading from the N-terminus, the 294-residue chain is 1,4-dihydroxy-2-naphthoate octaprenyltransferase (294 aa).

The next 6 membrane-spanning stretches (helical) occupy residues 35-55 (SAVW…VIGV), 103-123 (AGLA…ATCI), 140-160 (GFGE…GTEY), 166-186 (VDWV…SVLV), 220-240 (LLVA…WCAV), and 272-292 (GLAM…AGSV).

This sequence belongs to the MenA family. Type 1 subfamily.

Its subcellular location is the cell membrane. The enzyme catalyses an all-trans-polyprenyl diphosphate + 1,4-dihydroxy-2-naphthoate + H(+) = a 2-demethylmenaquinol + CO2 + diphosphate. It participates in quinol/quinone metabolism; menaquinone biosynthesis; menaquinol from 1,4-dihydroxy-2-naphthoate: step 1/2. Its function is as follows. Conversion of 1,4-dihydroxy-2-naphthoate (DHNA) to demethylmenaquinone (DMK). In Mycobacterium leprae (strain TN), this protein is 1,4-dihydroxy-2-naphthoate octaprenyltransferase.